The sequence spans 568 residues: MASHVDLLTELQLLEKVPTLERLRAAQKRRAQQLKKWAQYEQDLQHRKRKHERKRSTGGRRKKVSFEASVALLEASLRNDAEEVRYFLKNKVSPDLCNEDGLTALHQCCIDNFEEIVKLLLSHGANVNAKDNELWTPLHAAATCGHINLVKILVQYGADLLAVNSDGNMPYDLCEDEPTLDVIETCMAYQGITQEKINEMRAAPEQQMISDIHCMIAAGQDLDWVDAQGATLLHIAGANGYLRAAELLLDHGVRVDVKDWDGWEPLHAAAFWGQMQMAELLVSHGASLSARTSMDEMPIDLCEEEEFKVLLLELKHKHDVIMKSQLRHKSSLSRRTSSAGSRGKVVRRASLSDRTNLYRKEYEGEAILWQQRSASEDQRNSTYNGDIRETRTDQENKDPNPRLEKPVLLSEFPTKIPHSDMDMPVENGLRAPVSTYQYALCNGDVWKVHEVPDYSMAYGNPGVADATPSWSGYKEQSPQTLLELKRQRAAAKLLSHPFLSTHLGSGVSRTGEGSSEGKAPLIGGRTSPYSSNGTSVYYTVTSGDPPLLKFKAPIEEMEEKVHGCCRIS.

A coiled-coil region spans residues Glu-15–Arg-55. Phosphoserine is present on Ser-69. ANK repeat units follow at residues Asp-100–Ala-129, Glu-133–Ala-162, Gln-228–Val-257, and Asp-261–Ala-290. The tract at residues Arg-327–Val-346 is disordered. A phosphoserine mark is found at Ser-333, Ser-337, and Ser-350. Residues Ser-333–Arg-342 are compositionally biased toward low complexity. Positions Ser-373–Glu-404 are disordered. Over residues Asp-386 to Glu-404 the composition is skewed to basic and acidic residues. Phosphoserine is present on Ser-477. Positions Gly-504–Arg-525 are disordered. The stretch at Ser-531–Lys-560 is one ANK 5 repeat. Cys-564 carries S-palmitoyl cysteine lipidation. The residue at position 565 (Cys-565) is a Cysteine methyl ester. Cys-565 carries the S-farnesyl cysteine lipid modification. A propeptide spans Arg-566 to Ser-568 (removed in mature form).

Interacts with PPP1CA, PPP1CB and MSN. Interacts (via its fourth ankyrin repeat) with the mature dimeric form of RPSA/LAMR1. Interacts with EEF1A1. Interacts with PTEN. Interacts with ECE1. In terms of processing, phosphorylated by PKA and, after PKA priming, by GSK3B. Phosphorylation by GSK3B reduces its association with PP1C and enhances PP1C activity. Dephosphorylation by its associated PP1C results in enhanced association with PP1C, but reduced PP1C activity.

It localises to the cell membrane. The protein localises to the nucleus. The protein resides in the cell projection. Regulator of protein phosphatase 1 (PP1) that acts as a positive regulator of pulmonary endothelial cell (EC) barrier function. Protects the endothelial barrier from lipopolysaccharide (LPS)-induced vascular leakage. Involved in the regulation of the PI3K/AKT signaling pathway. Involved in the regulation of angiogenesis and endothelial cell proliferation through the control of ECE1 dephosphorylation, trafficking and activity. Involved in the regulation of endothelial cell filopodia extension. May be a downstream target for TGF-beta1 signaling cascade in endothelial cells. Involved in PKA-mediated moesin dephosphorylation which is important in EC barrier protection against thrombin stimulation. Promotes the interaction of PPP1CA with RPSA/LAMR1 and in turn facilitates the dephosphorylation of RPSA/LAMR1. Involved in the dephosphorylation of EEF1A1. The protein is Protein phosphatase 1 regulatory inhibitor subunit 16B (PPP1R16B) of Bos taurus (Bovine).